We begin with the raw amino-acid sequence, 981 residues long: Peroxisomal ATPase PEX6 (981 aa).

Residue arginine 119 is modified to Omega-N-methylarginine. ATP is bound by residues 471–478 (GPPGSGKT) and 745–752 (GPPGTGKT).

Belongs to the AAA ATPase family. In terms of assembly, interacts with PEX1; forming the PEX1-PEX6 AAA ATPase complex, which is composed of a heterohexamer formed by a trimer of PEX1-PEX6 dimers. Interacts with PEX26; interaction is direct and promotes recruitment to peroxisomal membranes. Interacts with ZFAND6. In terms of tissue distribution, in the teeth, expressed in ameloblasts and odontoblasts. Expressed in the retina, at higher levels in the ganglion cell layer and photoreceptor layer at the joint between the outer and inner segments.

Its subcellular location is the cytoplasm. It localises to the cytosol. It is found in the peroxisome membrane. The protein localises to the cell projection. The protein resides in the cilium. Its subcellular location is the photoreceptor outer segment. It catalyses the reaction ATP + H2O = ADP + phosphate + H(+). Functionally, component of the PEX1-PEX6 AAA ATPase complex, a protein dislocase complex that mediates the ATP-dependent extraction of the PEX5 receptor from peroxisomal membranes, an essential step for PEX5 recycling. Specifically recognizes PEX5 monoubiquitinated at 'Cys-11', and pulls it out of the peroxisome lumen through the PEX2-PEX10-PEX12 retrotranslocation channel. Extraction by the PEX1-PEX6 AAA ATPase complex is accompanied by unfolding of the TPR repeats and release of bound cargo from PEX5. In Mus musculus (Mouse), this protein is Peroxisomal ATPase PEX6.